A 246-amino-acid polypeptide reads, in one-letter code: Flagellar brake protein YcgR (246 aa).

In terms of domain architecture, PilZ spans 128 to 232; sequence KRAHFRAYVG…QAERQLLQAI (105 aa).

This sequence belongs to the YcgR family. As to quaternary structure, monomer. Interacts with the flagellar basal bodies.

The protein resides in the bacterial flagellum basal body. Its function is as follows. Acts as a flagellar brake, regulating swimming and swarming in a bis-(3'-5') cyclic diguanylic acid (c-di-GMP)-dependent manner. Binds 1 c-di-GMP dimer per subunit. Increasing levels of c-di-GMP lead to decreased motility. The protein is Flagellar brake protein YcgR of Thioalkalivibrio sulfidiphilus (strain HL-EbGR7).